A 611-amino-acid chain; its full sequence is Ankyrin repeat protein SKIP35 (611 aa).

ANK repeat units lie at residues 292-322 (LFSNSFDPGWASGMSATVIQGLLGMLVEGGA), 323-353 (DNVNQCFLEASRFGSTELVRVLLQIAQRNSL), 356-384 (DVDLALGFASHYCKIGTMKCLVEEGNAIA), 385-414 (FLGPLMRAAERGCMQVVQWFVKRGCRDMEL), 416-442 (LALTAATSSCQVEVAAYLLPRVPPPVL), and 445-478 (LSIEILKAAGERSGGSLQGVEFLLKSDFLGDSTA).

In terms of assembly, interacts with SKP1A/ASK1.

The polypeptide is Ankyrin repeat protein SKIP35 (SKIP35) (Arabidopsis thaliana (Mouse-ear cress)).